The chain runs to 107 residues: Ferredoxin 1 (107 aa).

2 consecutive 4Fe-4S ferredoxin-type domains span residues 2–30 (TFVV…YEGP) and 31–60 (NFLV…SEDE). Cysteine 9 and cysteine 17 together coordinate [3Fe-4S] cluster. The [4Fe-4S] cluster site is built by cysteine 21, cysteine 40, cysteine 43, and cysteine 46. Cysteine 50 lines the [3Fe-4S] cluster pocket.

[4Fe-4S] cluster is required as a cofactor. Requires [3Fe-4S] cluster as cofactor.

Ferredoxins are iron-sulfur proteins that transfer electrons in a wide variety of metabolic reactions. In Stutzerimonas stutzeri (Pseudomonas stutzeri), this protein is Ferredoxin 1.